An 82-amino-acid polypeptide reads, in one-letter code: Neuromacin (82 aa).

The N-terminal stretch at 1–23 (MALLNKLLCFALVFMIFGEFVTP) is a signal peptide. 4 disulfides stabilise this stretch: Cys25–Cys32, Cys47–Cys51, Cys61–Cys69, and Cys79–Cys81.

This sequence belongs to the macin family.

It localises to the secreted. This is Neuromacin from Hirudo medicinalis (Medicinal leech).